A 541-amino-acid chain; its full sequence is Plasminogen-binding protein PgbB (541 aa).

Composition is skewed to basic and acidic residues over residues H420–V434 and V446–K455. Residues H420–K541 form a disordered region. Residues D456 to I476 show a composition bias toward polar residues. Residues N480–K541 are compositionally biased toward basic and acidic residues.

The protein localises to the cell surface. Functionally, binds plasminogen, specifically, and in a concentration and lysine-dependent manner. Plasminogen is the precursor of plasmin, a serine protease that cleaves fibrin, fibronectin, laminin and vitronectin. Acquisition of plasminogen/plasmin could enable H.pylori to degrade host components. The chain is Plasminogen-binding protein PgbB (pgbB) from Helicobacter pylori (strain J99 / ATCC 700824) (Campylobacter pylori J99).